An 83-amino-acid chain; its full sequence is Small ribosomal subunit protein bS20 (83 aa).

The protein belongs to the bacterial ribosomal protein bS20 family.

Functionally, binds directly to 16S ribosomal RNA. The chain is Small ribosomal subunit protein bS20 from Leuconostoc citreum (strain KM20).